We begin with the raw amino-acid sequence, 41 residues long: Large ribosomal subunit protein bL36 (41 aa).

Belongs to the bacterial ribosomal protein bL36 family.

This is Large ribosomal subunit protein bL36 from Maricaulis maris (strain MCS10) (Caulobacter maris).